Consider the following 1050-residue polypeptide: MEKVYEELDEVKAVNEKLRIDYRNKTELLENLKKVQNEQLIEIREARLVNEKHGFEIEEKSREIAELKRANEELQRCLREKDSVVKRVNDVNDKLRANGEDKYREFEEEKRNMMSGLDEASEKNIDLEQKNNVYRAEIEGLKGLLAVAETKRIEAEKTVKGMKEMRGRDDVVVKMEEEKSQVEEKLKWKKEQFKHLEEAYEKLKNLFKDSKKEWEEEKSKLLDEIYSLQTKLDSVTRISEDLQKKLQMCNGALTQEETRRKHLEIQVSEFKAKYEDAFAECQDARTQLDDLAGKRDWEVAELRQTLSMKDAYFKEMKYENGKLEQENRELLGSLKELQEATIQGSGNSALSKLKNKFRNLENIHKNCSANLRSKEAEWSSQVEKMVEEINDYKLQLQSKEAALKEVELELENCRSSTAKMRLQYEEISIMFLVLSRTVSEAQSRLANAKDKQIKDEKREGNCYSLLMEQLDQKNAALAKAQMEIKEERESVACLLKRIEMLDLFENQNIQMQKEVERFKEMVEESSRFQTQMQEKMKEAENDYEEKLLQVCDALDNTNIDLVAEREKVVSLTRQIESLGTVKEKNLVMEKETQEYKEMLEESEKCRVLLEEQISQLESDSNENIRELCSKVDIAYAKLAEEVEKTASLVRKSESIDLNEEHRQRELDHYKEMLEESTKTQLLLQEKVVDVENDSKRKLADVSEALEIANSELSDKTSEVFQIEFQLWVWKSIAKRLKAELEQNQNLRKRVEASLLEQVGVGEAIKQEKNELVHKLKVISHARSSDSEKKESLMRDKDEMLESLQREVELLEQDSLRRELEDVVLAHMIGERELQNEREICALQQKDQDLCEVKHELEGSLKSVSLLLQQKQNEVNMLRKTWEKLTARQILTAVETESKKMMIIELEGEISSLSQKLETSNESVSCFRQEATKSRAELETKQTELKEVTTQMQEKLRTSEAEKTELVKEVASLSTEKRNLLSFISEMEDGMLKLYDGDTKLMKTLERVTQCCDGFGKENNNGETIGSPRLAMKHEEDVVTEDRSPFRPLNH.

3 coiled-coil regions span residues 1–420 (MEKV…TAKM), 463–627 (YSLL…IREL), and 692–981 (NDSK…NLLS).

This is an uncharacterized protein from Arabidopsis thaliana (Mouse-ear cress).